A 371-amino-acid polypeptide reads, in one-letter code: MVNNKKKTSSTFNVQVADFIRNHKKEGVAVDDEVTEKLVIPFELEAEQIDDLLERLTDGGISITDREGNPSTKYAVEEIKPEELTDEELLGSNSAKVNDPVRMYLKEIGVVPLLTNEEEKELAIAVENGDLEAKQRLAEANLRLVVSIAKRYVGRGMQFLDLIQEGNMGLMKAVDKFDYSKGFKFSTYATWWIRQAITRAIADQARTIRIPVHMVETINKLVREQRNLLQELGQDPTPEQIAERMDMTPDKVREILKIAQEPVSLETPIGEEDDSHLGDFIEDEVIENPVDYTTRVVLREQLDEVLDTLTDREENVLRLRFGLDDGKMRTLEDVGKVFDVTRERIRQIEAKALRKLRHPSRSKQLRDFVED.

A sigma-70 factor domain-2 region spans residues 137–207 (LAEANLRLVV…TRAIADQART (71 aa)). The Interaction with polymerase core subunit RpoC signature appears at 161-164 (DLIQ). Positions 216–292 (ETINKLVREQ…DEVIENPVDY (77 aa)) are sigma-70 factor domain-3. Residues 305–358 (VLDTLTDREENVLRLRFGLDDGKMRTLEDVGKVFDVTRERIRQIEAKALRKLRH) are sigma-70 factor domain-4. Positions 331 to 350 (LEDVGKVFDVTRERIRQIEA) form a DNA-binding region, H-T-H motif.

It belongs to the sigma-70 factor family. RpoD/SigA subfamily. Interacts transiently with the RNA polymerase catalytic core.

The protein localises to the cytoplasm. Sigma factors are initiation factors that promote the attachment of RNA polymerase to specific initiation sites and are then released. This sigma factor is the primary sigma factor during exponential growth. This chain is RNA polymerase sigma factor SigA, found in Streptococcus mutans serotype c (strain ATCC 700610 / UA159).